The sequence spans 131 residues: D-ribose pyranase (131 aa).

His20 serves as the catalytic Proton donor. Substrate-binding positions include Asp28, His98, and Tyr120–Asn122.

Belongs to the RbsD / FucU family. RbsD subfamily. As to quaternary structure, homodecamer.

The protein resides in the cytoplasm. The enzyme catalyses beta-D-ribopyranose = beta-D-ribofuranose. Its pathway is carbohydrate metabolism; D-ribose degradation; D-ribose 5-phosphate from beta-D-ribopyranose: step 1/2. Functionally, catalyzes the interconversion of beta-pyran and beta-furan forms of D-ribose. This chain is D-ribose pyranase, found in Bacillus cereus (strain 03BB102).